A 500-amino-acid chain; its full sequence is NAD(P)H-quinone oxidoreductase chain 4, chloroplastic (500 aa).

14 consecutive transmembrane segments (helical) span residues Phe4–Leu24, Tyr35–Phe55, Ile87–Val107, Leu113–Ser130, Leu134–Met154, Phe167–Leu187, Val207–Ile227, His242–Ile262, Ala272–Ala292, Ile305–Asp325, Gly330–Gly350, Leu386–Thr406, Ile416–Met436, and Leu462–Val482.

This sequence belongs to the complex I subunit 4 family.

Its subcellular location is the plastid. It localises to the chloroplast thylakoid membrane. It catalyses the reaction a plastoquinone + NADH + (n+1) H(+)(in) = a plastoquinol + NAD(+) + n H(+)(out). The catalysed reaction is a plastoquinone + NADPH + (n+1) H(+)(in) = a plastoquinol + NADP(+) + n H(+)(out). This is NAD(P)H-quinone oxidoreductase chain 4, chloroplastic from Guizotia abyssinica (Niger).